The chain runs to 368 residues: Endoglucanase (368 aa).

Residues 1-21 (MNVLRSGIVTMLLLAAFSVQA) form the signal peptide. Catalysis depends on Glu-55, which acts as the Proton donor. Asp-116 acts as the Nucleophile in catalysis.

The protein belongs to the glycosyl hydrolase 8 (cellulase D) family.

It is found in the secreted. It catalyses the reaction Endohydrolysis of (1-&gt;4)-beta-D-glucosidic linkages in cellulose, lichenin and cereal beta-D-glucans.. Its pathway is glycan metabolism; bacterial cellulose biosynthesis. Hydrolyzes carboxymethylcellulose. This Escherichia coli (strain K12) protein is Endoglucanase (bcsZ).